Here is a 377-residue protein sequence, read N- to C-terminus: MLISARRLRRCQSLQLLASCFVLSLMALLVQEDNSLVNHVKSYSYRYLINSYNFVNDSLSVPRDRSDGAAGYRYLINNRHKCLNEDVLLLLFVKTAPENRRRRNAIRKTWGNEDYIRSRYAANIKVVFALGVERDPVKSHHTQQDLVNENKRFKDLIQQDFSDTFHNLTLKLLLQFGWVNSFCPSAKFIMSADDDIFVHTPNLVTYLKSLPIETQDFWIGRVHRGSPPIRSKASKYYVPYEMYPWSSYPDYTAGAAYVVSRDVAAKVYEASQTLNTSLYIDDVFMGICANKMGVVPQYHVYFSGEGKSPYHPCIYNKMMTSHGHLGDLDYLWRQATDSNVKSLSSGFLGNVYCKIVNIMLLCKIGYVDTYPCSAAWS.

Residues 1–13 (MLISARRLRRCQS) lie on the Cytoplasmic side of the membrane. The helical; Signal-anchor for type II membrane protein transmembrane segment at 14 to 30 (LQLLASCFVLSLMALLV) threads the bilayer. At 31-377 (QEDNSLVNHV…DTYPCSAAWS (347 aa)) the chain is on the lumenal side. 3 N-linked (GlcNAc...) asparagine glycosylation sites follow: N56, N167, and N275.

The protein belongs to the glycosyltransferase 31 family.

It is found in the golgi apparatus membrane. It carries out the reaction a beta-D-Gal-(1-&gt;4)-beta-D-Glc-(1&lt;-&gt;1)-Cer(d18:1(4E)) + UDP-N-acetyl-alpha-D-glucosamine = a beta-D-GlcNAc-(1-&gt;3)-beta-D-Gal-(1-&gt;4)-beta-D-Glc-(1&lt;-&gt;1)-Cer(d18:1(4E)) + UDP + H(+). The catalysed reaction is a neolactoside nLc4Cer(d18:1(4E)) + UDP-N-acetyl-alpha-D-glucosamine = a neolactoside IV(3)-beta-GlcNAc-nLc4Cer(d18:1(4E)) + UDP + H(+). The protein operates within protein modification; protein glycosylation. Its function is as follows. Beta-1,3-N-acetylglucosaminyltransferase that plays a key role in the synthesis of lacto- or neolacto-series carbohydrate chains on glycolipids. The protein is Lactosylceramide 1,3-N-acetyl-beta-D-glucosaminyltransferase B (b3gnt5-b) of Xenopus laevis (African clawed frog).